A 200-amino-acid polypeptide reads, in one-letter code: HTH-type transcriptional repressor KstR2 (200 aa).

Residues Asn-9–Leu-69 enclose the HTH tetR-type domain. Residues Thr-32–Phe-51 constitute a DNA-binding region (H-T-H motif).

Homodimer.

Functionally, controls the expression of a small regulon that may play a role in the utilization of cholesterol. This chain is HTH-type transcriptional repressor KstR2 (kstR2), found in Mycobacterium tuberculosis (strain CDC 1551 / Oshkosh).